The primary structure comprises 819 residues: Leucine--tRNA ligase (819 aa).

Positions 51–61 match the 'HIGH' region motif; it reads PYPSGNLHIGH. The short motif at 586–590 is the 'KMSKS' region element; sequence KMSKS. Lys589 lines the ATP pocket.

Belongs to the class-I aminoacyl-tRNA synthetase family.

The protein localises to the cytoplasm. The enzyme catalyses tRNA(Leu) + L-leucine + ATP = L-leucyl-tRNA(Leu) + AMP + diphosphate. This chain is Leucine--tRNA ligase, found in Deinococcus geothermalis (strain DSM 11300 / CIP 105573 / AG-3a).